Reading from the N-terminus, the 307-residue chain is Methionyl-tRNA formyltransferase (307 aa).

Position 108-111 (108-111 (SLLP)) interacts with (6S)-5,6,7,8-tetrahydrofolate.

It belongs to the Fmt family.

The catalysed reaction is L-methionyl-tRNA(fMet) + (6R)-10-formyltetrahydrofolate = N-formyl-L-methionyl-tRNA(fMet) + (6S)-5,6,7,8-tetrahydrofolate + H(+). Functionally, attaches a formyl group to the free amino group of methionyl-tRNA(fMet). The formyl group appears to play a dual role in the initiator identity of N-formylmethionyl-tRNA by promoting its recognition by IF2 and preventing the misappropriation of this tRNA by the elongation apparatus. This Stenotrophomonas maltophilia (strain R551-3) protein is Methionyl-tRNA formyltransferase.